Here is a 274-residue protein sequence, read N- to C-terminus: Protein bax (274 aa).

The segment covering 32–64 (TTASQKSHLTKASNKQVSSKQEYSRNSAKSSSL) has biased composition (polar residues). A disordered region spans residues 32–74 (TTASQKSHLTKASNKQVSSKQEYSRNSAKSSSLPDLRKYPSGT). Residue 247–254 (GYSTKGKS) coordinates ATP.

The protein is Protein bax (bax) of Escherichia coli (strain K12).